The sequence spans 78 residues: Large ribosomal subunit protein bL28 (78 aa).

Positions 1–25 (MSRVCQVTGKRPAVGNNRSHAKNAT) are disordered.

This sequence belongs to the bacterial ribosomal protein bL28 family.

This Aliivibrio salmonicida (strain LFI1238) (Vibrio salmonicida (strain LFI1238)) protein is Large ribosomal subunit protein bL28.